The chain runs to 156 residues: Cytochrome c-type biogenesis protein CcmE (156 aa).

Over 1–7 (MTRRQRR) the chain is Cytoplasmic. The chain crosses the membrane as a helical; Signal-anchor for type II membrane protein span at residues 8-28 (LGILLAALVCAGAATALTLNA). Residues 29–156 (FRSNLVFFFS…AKESARSASR (128 aa)) lie on the Periplasmic side of the membrane. The heme site is built by His123 and Tyr127.

It belongs to the CcmE/CycJ family.

Its subcellular location is the cell inner membrane. In terms of biological role, heme chaperone required for the biogenesis of c-type cytochromes. Transiently binds heme delivered by CcmC and transfers the heme to apo-cytochromes in a process facilitated by CcmF and CcmH. This is Cytochrome c-type biogenesis protein CcmE from Ralstonia pickettii (strain 12J).